The following is a 260-amino-acid chain: Global transcriptional regulator CodY (260 aa).

Residues methionine 1–leucine 159 form a GAF domain region. Residues alanine 207–arginine 226 constitute a DNA-binding region (H-T-H motif).

The protein belongs to the CodY family.

The protein localises to the cytoplasm. DNA-binding global transcriptional regulator which is involved in the adaptive response to starvation and acts by directly or indirectly controlling the expression of numerous genes in response to nutrient availability. During rapid exponential growth, CodY is highly active and represses genes whose products allow adaptation to nutrient depletion. This Streptococcus pyogenes serotype M3 (strain SSI-1) protein is Global transcriptional regulator CodY.